Reading from the N-terminus, the 657-residue chain is UvrABC system protein B (657 aa).

Positions 23–414 (KSIKKGNKYQ…KENIFHQIMR (392 aa)) constitute a Helicase ATP-binding domain. 36–43 (GVTGSGKT) is an ATP binding site. The Beta-hairpin motif lies at 89-112 (YYDYYQPEAYIPRTDVFIEKDSST). One can recognise a Helicase C-terminal domain in the interval 431 to 593 (QVEILFDEAK…ITPTSVKRHI (163 aa)). The region spanning 622–657 (AKLVKELRKQMLEAAKALEFEKAAAIRDEINKLRDL) is the UVR domain.

This sequence belongs to the UvrB family. Forms a heterotetramer with UvrA during the search for lesions. Interacts with UvrC in an incision complex.

The protein resides in the cytoplasm. The UvrABC repair system catalyzes the recognition and processing of DNA lesions. A damage recognition complex composed of 2 UvrA and 2 UvrB subunits scans DNA for abnormalities. Upon binding of the UvrA(2)B(2) complex to a putative damaged site, the DNA wraps around one UvrB monomer. DNA wrap is dependent on ATP binding by UvrB and probably causes local melting of the DNA helix, facilitating insertion of UvrB beta-hairpin between the DNA strands. Then UvrB probes one DNA strand for the presence of a lesion. If a lesion is found the UvrA subunits dissociate and the UvrB-DNA preincision complex is formed. This complex is subsequently bound by UvrC and the second UvrB is released. If no lesion is found, the DNA wraps around the other UvrB subunit that will check the other stand for damage. The sequence is that of UvrABC system protein B from Campylobacter jejuni subsp. jejuni serotype O:2 (strain ATCC 700819 / NCTC 11168).